A 435-amino-acid polypeptide reads, in one-letter code: Adenylosuccinate lyase (435 aa).

N(6)-(1,2-dicarboxyethyl)-AMP-binding positions include R4–Y5, R73–D75, and T99–S100. H147 functions as the Proton donor/acceptor in the catalytic mechanism. Residue Q218 participates in N(6)-(1,2-dicarboxyethyl)-AMP binding. S268 acts as the Proton donor/acceptor in catalysis. Residues S269, K274–N276, N282, and S313–V317 contribute to the N(6)-(1,2-dicarboxyethyl)-AMP site.

Belongs to the lyase 1 family. Adenylosuccinate lyase subfamily. As to quaternary structure, homotetramer. Residues from neighboring subunits contribute catalytic and substrate-binding residues to each active site.

The catalysed reaction is N(6)-(1,2-dicarboxyethyl)-AMP = fumarate + AMP. The enzyme catalyses (2S)-2-[5-amino-1-(5-phospho-beta-D-ribosyl)imidazole-4-carboxamido]succinate = 5-amino-1-(5-phospho-beta-D-ribosyl)imidazole-4-carboxamide + fumarate. Its pathway is purine metabolism; AMP biosynthesis via de novo pathway; AMP from IMP: step 2/2. The protein operates within purine metabolism; IMP biosynthesis via de novo pathway; 5-amino-1-(5-phospho-D-ribosyl)imidazole-4-carboxamide from 5-amino-1-(5-phospho-D-ribosyl)imidazole-4-carboxylate: step 2/2. Catalyzes two reactions in de novo purine nucleotide biosynthesis. Catalyzes the breakdown of 5-aminoimidazole- (N-succinylocarboxamide) ribotide (SAICAR or 2-[5-amino-1-(5-phospho-beta-D-ribosyl)imidazole-4-carboxamido]succinate) to 5-aminoimidazole-4-carboxamide ribotide (AICAR or 5-amino-1-(5-phospho-beta-D-ribosyl)imidazole-4-carboxamide) and fumarate, and of adenylosuccinate (ADS or N(6)-(1,2-dicarboxyethyl)-AMP) to adenosine monophosphate (AMP) and fumarate. This Deinococcus radiodurans (strain ATCC 13939 / DSM 20539 / JCM 16871 / CCUG 27074 / LMG 4051 / NBRC 15346 / NCIMB 9279 / VKM B-1422 / R1) protein is Adenylosuccinate lyase (purB).